A 534-amino-acid chain; its full sequence is Glycerophosphodiester transporter GIT2 (534 aa).

A run of 12 helical transmembrane segments spans residues 63–83 (GAGLFADGYVNNSIGIVMACL), 96–116 (AISNIGSIGFVGTVVGQLSFG), 135–155 (LIAFTLLCAVGSWGTTIQGFF), 163–183 (FCLGVAIGAEYPTSSVIASEF), 202–222 (FMIDFGFVVSAFVPFVLLWIF), 230–250 (LWRVSIGLGAILPTALFFIRL), 289–309 (MIWFIYNFSVYSFGTFNAIIL), 322–342 (WGWSVVFNLFYIPGSFLGAFS), 350–370 (LTLAIGVGLQGIIGFIMSACL), 377–397 (VAAFTVVFGIFATLGEFGPGG), 417–437 (GIAAAMGKIGAFVGTWIFPAI), and 453–473 (VPFYLSSGLCIFSALLTFFLC).

The protein belongs to the major facilitator superfamily. Sugar transporter (TC 2.A.1.1) family.

It localises to the cell membrane. In terms of biological role, probable glycerophosphodiester transporter. Does not possess detectable glycerophosphoinositol (GroPIns) transport activity. Might be involved in the uptake of glycerophosphocholine (GroPCho). The expanded ability to utilize GroPIns and GroPCho results from the organism's pathogenic nature and its need to occupy a variety of environments within its host organism. This possibility is buttressed by the fact that GroPIns and GroPCho are present and abundant in human fluids. In Candida albicans (strain SC5314 / ATCC MYA-2876) (Yeast), this protein is Glycerophosphodiester transporter GIT2.